Here is a 250-residue protein sequence, read N- to C-terminus: 2,3-bisphosphoglycerate-dependent phosphoglycerate mutase (250 aa).

Residues 12-19 (RHGQSAWN), 25-26 (TG), R64, 91-94 (ERHY), K102, 118-119 (RR), and 185-186 (GN) contribute to the substrate site. H13 serves as the catalytic Tele-phosphohistidine intermediate. The Proton donor/acceptor role is filled by E91.

Belongs to the phosphoglycerate mutase family. BPG-dependent PGAM subfamily.

The enzyme catalyses (2R)-2-phosphoglycerate = (2R)-3-phosphoglycerate. It functions in the pathway carbohydrate degradation; glycolysis; pyruvate from D-glyceraldehyde 3-phosphate: step 3/5. In terms of biological role, catalyzes the interconversion of 2-phosphoglycerate and 3-phosphoglycerate. The sequence is that of 2,3-bisphosphoglycerate-dependent phosphoglycerate mutase from Corynebacterium efficiens (strain DSM 44549 / YS-314 / AJ 12310 / JCM 11189 / NBRC 100395).